We begin with the raw amino-acid sequence, 394 residues long: 1-deoxy-D-xylulose 5-phosphate reductoisomerase (394 aa).

Residues T12, G13, S14, I15, K39, Q40, and N126 each coordinate NADPH. K127 is a 1-deoxy-D-xylulose 5-phosphate binding site. Position 128 (E128) interacts with NADPH. Mn(2+) is bound at residue D152. Positions 153, 154, 183, and 206 each coordinate 1-deoxy-D-xylulose 5-phosphate. Residue E154 coordinates Mn(2+). Position 212 (G212) interacts with NADPH. 1-deoxy-D-xylulose 5-phosphate is bound by residues S219, N224, K225, and E228. Residue E228 coordinates Mn(2+).

It belongs to the DXR family. Mg(2+) serves as cofactor. It depends on Mn(2+) as a cofactor.

The enzyme catalyses 2-C-methyl-D-erythritol 4-phosphate + NADP(+) = 1-deoxy-D-xylulose 5-phosphate + NADPH + H(+). The protein operates within isoprenoid biosynthesis; isopentenyl diphosphate biosynthesis via DXP pathway; isopentenyl diphosphate from 1-deoxy-D-xylulose 5-phosphate: step 1/6. Its function is as follows. Catalyzes the NADPH-dependent rearrangement and reduction of 1-deoxy-D-xylulose-5-phosphate (DXP) to 2-C-methyl-D-erythritol 4-phosphate (MEP). The sequence is that of 1-deoxy-D-xylulose 5-phosphate reductoisomerase from Neisseria meningitidis serogroup B (strain ATCC BAA-335 / MC58).